Here is a 718-residue protein sequence, read N- to C-terminus: Methionine--tRNA ligase (718 aa).

The short motif at 27 to 37 (PYANGQIHIGH) is the 'HIGH' region element. Residues Cys158, Cys161, Cys171, and Cys174 each coordinate Zn(2+). Residues 348 to 352 (KMSKS) carry the 'KMSKS' region motif. An ATP-binding site is contributed by Lys351. A tRNA-binding domain is found at 612 to 718 (DFAKIDLRIA…SGAKPGMRVK (107 aa)).

Belongs to the class-I aminoacyl-tRNA synthetase family. MetG type 1 subfamily. Homodimer. It depends on Zn(2+) as a cofactor.

It is found in the cytoplasm. The enzyme catalyses tRNA(Met) + L-methionine + ATP = L-methionyl-tRNA(Met) + AMP + diphosphate. Functionally, is required not only for elongation of protein synthesis but also for the initiation of all mRNA translation through initiator tRNA(fMet) aminoacylation. This is Methionine--tRNA ligase from Burkholderia orbicola (strain AU 1054).